The following is a 552-amino-acid chain: Putative lipase ATG15 (552 aa).

The Cytoplasmic portion of the chain corresponds to 1–26; sequence MLHITEKEQTRGLRQLEKRGKRLLPP. A helical; Signal-anchor for type II membrane protein membrane pass occupies residues 27–49; that stretch reads LIKFIWFCLISAACVAATTFYWL. Over 50-552 the chain is Lumenal; that stretch reads RLSPVHNIHK…WRFVSHDDKE (503 aa). Asparagine 63, asparagine 147, asparagine 239, asparagine 307, and asparagine 391 each carry an N-linked (GlcNAc...) asparagine glycan. Serine 409 acts as the Charge relay system in catalysis. Asparagine 526 carries an N-linked (GlcNAc...) asparagine glycan.

Belongs to the AB hydrolase superfamily. Lipase family. Binds to both phosphatidylinositol (PI) and phosphatidylinositol 3,5-bisphosphate (PIP2).

The protein resides in the endosome. Its subcellular location is the multivesicular body membrane. It is found in the prevacuolar compartment membrane. It catalyses the reaction a triacylglycerol + H2O = a diacylglycerol + a fatty acid + H(+). Lipase which is essential for lysis of subvacuolar cytoplasm to vacuole targeted bodies and intravacuolar autophagic bodies. Involved in the lysis of intravacuolar multivesicular body (MVB) vesicles. The intravacuolar membrane disintegration by ATG15 is critical to life span extension. The chain is Putative lipase ATG15 (ATG15) from Lodderomyces elongisporus (strain ATCC 11503 / CBS 2605 / JCM 1781 / NBRC 1676 / NRRL YB-4239) (Yeast).